Reading from the N-terminus, the 159-residue chain is Cyclic pyranopterin monophosphate synthase (159 aa).

Residues 75 to 77 and 113 to 114 contribute to the substrate site; these read LCH and ME. D128 is a catalytic residue.

Belongs to the MoaC family. As to quaternary structure, homohexamer; trimer of dimers.

It catalyses the reaction (8S)-3',8-cyclo-7,8-dihydroguanosine 5'-triphosphate = cyclic pyranopterin phosphate + diphosphate. The protein operates within cofactor biosynthesis; molybdopterin biosynthesis. Functionally, catalyzes the conversion of (8S)-3',8-cyclo-7,8-dihydroguanosine 5'-triphosphate to cyclic pyranopterin monophosphate (cPMP). This Serratia proteamaculans (strain 568) protein is Cyclic pyranopterin monophosphate synthase.